The sequence spans 320 residues: Malate dehydrogenase (320 aa).

NAD(+)-binding positions include 10 to 15 (GSGMIG) and D34. Substrate contacts are provided by R83 and R89. NAD(+) contacts are provided by residues N96 and 119–121 (ITN). Residues N121 and R152 each contribute to the substrate site. H176 acts as the Proton acceptor in catalysis.

The protein belongs to the LDH/MDH superfamily. MDH type 3 family.

The enzyme catalyses (S)-malate + NAD(+) = oxaloacetate + NADH + H(+). Its function is as follows. Catalyzes the reversible oxidation of malate to oxaloacetate. The chain is Malate dehydrogenase from Rhizobium etli (strain CIAT 652).